Reading from the N-terminus, the 296-residue chain is 4-hydroxybenzoate octaprenyltransferase (296 aa).

9 helical membrane passes run 29–49 (IGIY…AEGV), 55–75 (LFIF…INDY), 102–122 (ALVL…FTNA), 124–141 (TIWL…YPFM), 146–166 (FYPQ…AFTA), 169–189 (GSLP…TVAY), 216–236 (ADRL…LLAG), 239–259 (FELG…FVWE), and 271–291 (CFNA…GIVL).

This sequence belongs to the UbiA prenyltransferase family. Mg(2+) serves as cofactor.

The protein resides in the cell inner membrane. It carries out the reaction all-trans-octaprenyl diphosphate + 4-hydroxybenzoate = 4-hydroxy-3-(all-trans-octaprenyl)benzoate + diphosphate. Its pathway is cofactor biosynthesis; ubiquinone biosynthesis. In terms of biological role, catalyzes the prenylation of para-hydroxybenzoate (PHB) with an all-trans polyprenyl group. Mediates the second step in the final reaction sequence of ubiquinone-8 (UQ-8) biosynthesis, which is the condensation of the polyisoprenoid side chain with PHB, generating the first membrane-bound Q intermediate 3-octaprenyl-4-hydroxybenzoate. The polypeptide is 4-hydroxybenzoate octaprenyltransferase (Ectopseudomonas mendocina (strain ymp) (Pseudomonas mendocina)).